The chain runs to 340 residues: Tetraacyldisaccharide 4'-kinase (340 aa).

51–58 (HMGGAGKT) contributes to the ATP binding site.

The protein belongs to the LpxK family.

The enzyme catalyses a lipid A disaccharide + ATP = a lipid IVA + ADP + H(+). It functions in the pathway glycolipid biosynthesis; lipid IV(A) biosynthesis; lipid IV(A) from (3R)-3-hydroxytetradecanoyl-[acyl-carrier-protein] and UDP-N-acetyl-alpha-D-glucosamine: step 6/6. Functionally, transfers the gamma-phosphate of ATP to the 4'-position of a tetraacyldisaccharide 1-phosphate intermediate (termed DS-1-P) to form tetraacyldisaccharide 1,4'-bis-phosphate (lipid IVA). This is Tetraacyldisaccharide 4'-kinase from Rhodopseudomonas palustris (strain TIE-1).